We begin with the raw amino-acid sequence, 1342 residues long: DNA-directed RNA polymerase subunit beta (1342 aa).

The protein belongs to the RNA polymerase beta chain family. As to quaternary structure, the RNAP catalytic core consists of 2 alpha, 1 beta, 1 beta' and 1 omega subunit. When a sigma factor is associated with the core the holoenzyme is formed, which can initiate transcription.

The enzyme catalyses RNA(n) + a ribonucleoside 5'-triphosphate = RNA(n+1) + diphosphate. Its function is as follows. DNA-dependent RNA polymerase catalyzes the transcription of DNA into RNA using the four ribonucleoside triphosphates as substrates. The polypeptide is DNA-directed RNA polymerase subunit beta (Yersinia pseudotuberculosis serotype O:1b (strain IP 31758)).